The following is a 175-amino-acid chain: ATP synthase subunit b (175 aa).

The chain crosses the membrane as a helical span at residues 24–44 (LVLWQIAATVILIIVVRIFLW).

Belongs to the ATPase B chain family. F-type ATPases have 2 components, F(1) - the catalytic core - and F(0) - the membrane proton channel. F(1) has five subunits: alpha(3), beta(3), gamma(1), delta(1), epsilon(1). F(0) has three main subunits: a(1), b(2) and c(10-14). The alpha and beta chains form an alternating ring which encloses part of the gamma chain. F(1) is attached to F(0) by a central stalk formed by the gamma and epsilon chains, while a peripheral stalk is formed by the delta and b chains.

It localises to the cell membrane. F(1)F(0) ATP synthase produces ATP from ADP in the presence of a proton or sodium gradient. F-type ATPases consist of two structural domains, F(1) containing the extramembraneous catalytic core and F(0) containing the membrane proton channel, linked together by a central stalk and a peripheral stalk. During catalysis, ATP synthesis in the catalytic domain of F(1) is coupled via a rotary mechanism of the central stalk subunits to proton translocation. Functionally, component of the F(0) channel, it forms part of the peripheral stalk, linking F(1) to F(0). The protein is ATP synthase subunit b of Acholeplasma laidlawii (strain PG-8A).